The chain runs to 134 residues: ATP synthase epsilon chain, chloroplastic (134 aa).

It belongs to the ATPase epsilon chain family. In terms of assembly, F-type ATPases have 2 components, CF(1) - the catalytic core - and CF(0) - the membrane proton channel. CF(1) has five subunits: alpha(3), beta(3), gamma(1), delta(1), epsilon(1). CF(0) has three main subunits: a, b and c.

Its subcellular location is the plastid. It localises to the chloroplast thylakoid membrane. In terms of biological role, produces ATP from ADP in the presence of a proton gradient across the membrane. The protein is ATP synthase epsilon chain, chloroplastic of Gracilaria tenuistipitata var. liui (Red alga).